The sequence spans 169 residues: Type II secretion system protein H (169 aa).

The propeptide at 1–29 (MRVARLPLLHPHRAAPVVRRQLRGSSLLE) is leader sequence. Methionine 30 carries the N-methylmethionine modification. A helical transmembrane segment spans residues 32–52 (LVIALIALAGVLAAAALTGGI).

It belongs to the GSP H family. In terms of assembly, type II secretion is composed of four main components: the outer membrane complex, the inner membrane complex, the cytoplasmic secretion ATPase and the periplasm-spanning pseudopilus. Interacts with core component XpsG. Interacts with minor pseudopilins XpsI and XpsJ. In terms of processing, cleaved by prepilin peptidase. Post-translationally, methylated by prepilin peptidase at the amino group of the N-terminal phenylalanine once the leader sequence is cleaved by prepilin peptidase.

It localises to the cell inner membrane. Functionally, component of the type II secretion system required for the energy-dependent secretion of extracellular factors such as proteases and toxins from the periplasm. Part of the pseudopilus tip complex that is critical for the recognition and binding of secretion substrates. The chain is Type II secretion system protein H (xpsH) from Xanthomonas campestris pv. campestris (strain ATCC 33913 / DSM 3586 / NCPPB 528 / LMG 568 / P 25).